Consider the following 482-residue polypeptide: Islet cell autoantigen 1-like protein (482 aa).

Residues 44–247 (ASDAELDAKL…TARMMSQIHE (204 aa)) form the AH domain. Disordered stretches follow at residues 365-393 (TQEC…PLAH) and 427-449 (SHTD…PNNG). Polar residues-rich tracts occupy residues 366–385 (QECQ…QEPS) and 428–449 (HTDN…PNNG).

The sequence is that of Islet cell autoantigen 1-like protein (ICA1L) from Homo sapiens (Human).